Here is a 449-residue protein sequence, read N- to C-terminus: Omega-amino acid--pyruvate aminotransferase (449 aa).

Residue tryptophan 60 participates in substrate binding. Glycine 119–serine 120 contacts pyridoxal 5'-phosphate. N6-(pyridoxal phosphate)lysine is present on lysine 288. Threonine 327 contacts pyridoxal 5'-phosphate. Substrate-binding residues include arginine 414 and glutamine 421.

It belongs to the class-III pyridoxal-phosphate-dependent aminotransferase family. In terms of assembly, homotetramer. Pyridoxal 5'-phosphate is required as a cofactor.

The catalysed reaction is 3-oxopropanoate + L-alanine = beta-alanine + pyruvate. Functionally, catalyzes transamination between a variety of omega-amino acids, mono and diamines, and pyruvate. Plays a pivotal role in the metabolism of the omega amino acids. This is Omega-amino acid--pyruvate aminotransferase from Pseudomonas putida (Arthrobacter siderocapsulatus).